Reading from the N-terminus, the 305-residue chain is MIKQRTLKRIVQATGVGLHTGKKVTLTLRPAPANTGVIYRRTDLNPPVDFPADAKSVRDTMLCTCLVNEHDVRISTVEHLNAALAGLGIDNIVIEVDAPEIPIMDGSAAPFVYLLLDAGIEELNSAKKFVRIKETVRVEDGDKWAEFRPYNGFTLDFTIDFNHPAIDSSTQRYAMNFSADAFMRQISRARTFGFMRDIEYLQSRGLCLGGSFDCAIVVDDYRVLNEDGLRFEDEFVRHKMLDAIGDLFMCGHNIIGAFTAYKSGHALNNKLLQAVLAKQEAWEYVTFQDDAELPLAFKAPSTVLA.

Residues H79, H238, and D242 each coordinate Zn(2+). The active-site Proton donor is H265.

This sequence belongs to the LpxC family. Zn(2+) serves as cofactor.

The catalysed reaction is a UDP-3-O-[(3R)-3-hydroxyacyl]-N-acetyl-alpha-D-glucosamine + H2O = a UDP-3-O-[(3R)-3-hydroxyacyl]-alpha-D-glucosamine + acetate. Its pathway is glycolipid biosynthesis; lipid IV(A) biosynthesis; lipid IV(A) from (3R)-3-hydroxytetradecanoyl-[acyl-carrier-protein] and UDP-N-acetyl-alpha-D-glucosamine: step 2/6. Catalyzes the hydrolysis of UDP-3-O-myristoyl-N-acetylglucosamine to form UDP-3-O-myristoylglucosamine and acetate, the committed step in lipid A biosynthesis. The polypeptide is UDP-3-O-acyl-N-acetylglucosamine deacetylase (Escherichia fergusonii (strain ATCC 35469 / DSM 13698 / CCUG 18766 / IAM 14443 / JCM 21226 / LMG 7866 / NBRC 102419 / NCTC 12128 / CDC 0568-73)).